The following is a 197-amino-acid chain: Protein-methionine-sulfoxide reductase heme-binding subunit MsrQ (197 aa).

The next 6 membrane-spanning stretches (helical) occupy residues 10–30 (IFIV…MNLL), 42–62 (LGLG…LQKL), 75–95 (LGLW…FFIL), 110–130 (PYII…VTSN), 147–167 (LVYA…RSDL), and 169–189 (EWAI…PAVA).

The protein belongs to the MsrQ family. In terms of assembly, heterodimer of a catalytic subunit (MsrP) and a heme-binding subunit (MsrQ). The cofactor is FMN. It depends on heme b as a cofactor.

The protein localises to the cell inner membrane. Part of the MsrPQ system that repairs oxidized periplasmic proteins containing methionine sulfoxide residues (Met-O), using respiratory chain electrons. Thus protects these proteins from oxidative-stress damage caused by reactive species of oxygen and chlorine generated by the host defense mechanisms. MsrPQ is essential for the maintenance of envelope integrity under bleach stress, rescuing a wide series of structurally unrelated periplasmic proteins from methionine oxidation. MsrQ provides electrons for reduction to the reductase catalytic subunit MsrP, using the quinone pool of the respiratory chain. This Pseudomonas putida (strain ATCC 47054 / DSM 6125 / CFBP 8728 / NCIMB 11950 / KT2440) protein is Protein-methionine-sulfoxide reductase heme-binding subunit MsrQ.